The following is a 1412-amino-acid chain: DNA-directed RNA polymerase subunit beta' (1412 aa).

Zn(2+) contacts are provided by cysteine 70, cysteine 72, cysteine 85, and cysteine 88. Aspartate 460, aspartate 462, and aspartate 464 together coordinate Mg(2+). Residues cysteine 819, cysteine 893, cysteine 900, and cysteine 903 each coordinate Zn(2+). Residues 1391 to 1412 (AEESFEFGTPETPAAEQQHSGE) form a disordered region.

This sequence belongs to the RNA polymerase beta' chain family. In terms of assembly, the RNAP catalytic core consists of 2 alpha, 1 beta, 1 beta' and 1 omega subunit. When a sigma factor is associated with the core the holoenzyme is formed, which can initiate transcription. Mg(2+) is required as a cofactor. It depends on Zn(2+) as a cofactor.

The enzyme catalyses RNA(n) + a ribonucleoside 5'-triphosphate = RNA(n+1) + diphosphate. In terms of biological role, DNA-dependent RNA polymerase catalyzes the transcription of DNA into RNA using the four ribonucleoside triphosphates as substrates. The polypeptide is DNA-directed RNA polymerase subunit beta' (Paraburkholderia phytofirmans (strain DSM 17436 / LMG 22146 / PsJN) (Burkholderia phytofirmans)).